A 250-amino-acid chain; its full sequence is MLAKRIIPCLDIKDGQTVKGTNFVNLRQAGDPVELGRAYSEQGADELVFLDITASHEGRKTFAELVRRIAANISIPFTVGGGINELSDVDRLLNAGADKISINSSAIRNPQLIDDIAKHFGSQVCVLAVDARQTGNGWKCYLNGGRIETDKELRTWTKEAQERGAGEVLFTSMNHDGVKTGYANEALAELASQLSIPVIASGGAGRMEHFRDAFTLGKADAALAASVFHFGEIKIPELKSYLCGQGITVR.

Residues Asp11 and Asp130 contribute to the active site.

Belongs to the HisA/HisF family. As to quaternary structure, heterodimer of HisH and HisF.

It localises to the cytoplasm. The enzyme catalyses 5-[(5-phospho-1-deoxy-D-ribulos-1-ylimino)methylamino]-1-(5-phospho-beta-D-ribosyl)imidazole-4-carboxamide + L-glutamine = D-erythro-1-(imidazol-4-yl)glycerol 3-phosphate + 5-amino-1-(5-phospho-beta-D-ribosyl)imidazole-4-carboxamide + L-glutamate + H(+). It functions in the pathway amino-acid biosynthesis; L-histidine biosynthesis; L-histidine from 5-phospho-alpha-D-ribose 1-diphosphate: step 5/9. Its function is as follows. IGPS catalyzes the conversion of PRFAR and glutamine to IGP, AICAR and glutamate. The HisF subunit catalyzes the cyclization activity that produces IGP and AICAR from PRFAR using the ammonia provided by the HisH subunit. The polypeptide is Imidazole glycerol phosphate synthase subunit HisF (Bacteroides fragilis (strain ATCC 25285 / DSM 2151 / CCUG 4856 / JCM 11019 / LMG 10263 / NCTC 9343 / Onslow / VPI 2553 / EN-2)).